Consider the following 93-residue polypeptide: uncharacterized protein (93 aa).

3 consecutive transmembrane segments (helical) span residues 15–35 (MAGLRVLSSMIELTAAIVMLV), 48–68 (ILAIVGPLIFIITMTVGIYQI), and 72–92 (LSYAKLILIFTGVVLILAGVH).

It localises to the cell membrane. This is an uncharacterized protein from Bacillus subtilis (strain 168).